A 184-amino-acid polypeptide reads, in one-letter code: ATP synthase subunit b 1 (184 aa).

Residues 36 to 55 (NILNLAILVGVLVFYGRKVV) traverse the membrane as a helical segment.

It belongs to the ATPase B chain family. As to quaternary structure, F-type ATPases have 2 components, F(1) - the catalytic core - and F(0) - the membrane proton channel. F(1) has five subunits: alpha(3), beta(3), gamma(1), delta(1), epsilon(1). F(0) has four main subunits: a(1), b(1), b'(1) and c(10-14). The alpha and beta chains form an alternating ring which encloses part of the gamma chain. F(1) is attached to F(0) by a central stalk formed by the gamma and epsilon chains, while a peripheral stalk is formed by the delta, b and b' chains.

It is found in the cellular thylakoid membrane. Functionally, f(1)F(0) ATP synthase produces ATP from ADP in the presence of a proton or sodium gradient. F-type ATPases consist of two structural domains, F(1) containing the extramembraneous catalytic core and F(0) containing the membrane proton channel, linked together by a central stalk and a peripheral stalk. During catalysis, ATP synthesis in the catalytic domain of F(1) is coupled via a rotary mechanism of the central stalk subunits to proton translocation. In terms of biological role, component of the F(0) channel, it forms part of the peripheral stalk, linking F(1) to F(0). This Crocosphaera subtropica (strain ATCC 51142 / BH68) (Cyanothece sp. (strain ATCC 51142)) protein is ATP synthase subunit b 1.